Here is a 562-residue protein sequence, read N- to C-terminus: DNA-binding protein MutS2 (562 aa).

380–387 (GANSGGKT) contributes to the ATP binding site.

It belongs to the DNA mismatch repair MutS family. Archaeal Muts2 subfamily. As to quaternary structure, multimer. Requires Co(2+) as cofactor. Mn(2+) is required as a cofactor.

In terms of biological role, has ATPase and non-specific DNA-binding activities. May be involved in recombination and/or recombinational repair. Not involved in mismatch repair. This Pyrococcus furiosus (strain ATCC 43587 / DSM 3638 / JCM 8422 / Vc1) protein is DNA-binding protein MutS2.